The following is a 588-amino-acid chain: ATP-dependent lipid A-core flippase (588 aa).

6 helical membrane-spanning segments follow: residues 23–43 (FWPVLLLGVLANILYSGIDAG), 56–76 (FITIDLNFVKQIPLIVLIGIT), 141–161 (DALTDFIQNICLVIGLLTVMM), 162–182 (VICWQLSLMFLLTIPFVGIIV), 257–277 (LVIAIGIATIIMAAIHLSTVI), and 278–298 (TISAGSFLAIIAAMLQLIKPM). The region spanning 28–310 (LLGVLANILY…LTTLNATIQR (283 aa)) is the ABC transmembrane type-1 domain. The region spanning 342–576 (IEFKHVYHAY…DGHYAQLYKV (235 aa)) is the ABC transporter domain. 375–382 (GHSGSGKT) contacts ATP.

The protein belongs to the ABC transporter superfamily. Lipid exporter (TC 3.A.1.106) family. Homodimer.

It localises to the cell inner membrane. The enzyme catalyses ATP + H2O + lipid A-core oligosaccharideSide 1 = ADP + phosphate + lipid A-core oligosaccharideSide 2.. In terms of biological role, involved in lipopolysaccharide (LPS) biosynthesis. Translocates lipid A-core from the inner to the outer leaflet of the inner membrane. Transmembrane domains (TMD) form a pore in the inner membrane and the ATP-binding domain (NBD) is responsible for energy generation. The polypeptide is ATP-dependent lipid A-core flippase (Legionella pneumophila subsp. pneumophila (strain Philadelphia 1 / ATCC 33152 / DSM 7513)).